The sequence spans 344 residues: DNA-directed RNA polymerase subunit alpha (344 aa).

An alpha N-terminal domain (alpha-NTD) region spans residues 1–238; that stretch reads MKVIKTAPLI…KQLGVFGEKP (238 aa). The interval 253–344 is alpha C-terminal domain (alpha-CTD); sequence DAKDLSAKIE…EKLEDKGGND (92 aa).

It belongs to the RNA polymerase alpha chain family. In terms of assembly, homodimer. The RNAP catalytic core consists of 2 alpha, 1 beta, 1 beta' and 1 omega subunit. When a sigma factor is associated with the core the holoenzyme is formed, which can initiate transcription.

It carries out the reaction RNA(n) + a ribonucleoside 5'-triphosphate = RNA(n+1) + diphosphate. DNA-dependent RNA polymerase catalyzes the transcription of DNA into RNA using the four ribonucleoside triphosphates as substrates. The protein is DNA-directed RNA polymerase subunit alpha of Helicobacter acinonychis (strain Sheeba).